Reading from the N-terminus, the 246-residue chain is Ribonuclease PH (246 aa).

Positions 67–87 are disordered; the sequence is NMLPGSTSPRKRRDRSGKVDG. Phosphate is bound by residues arginine 88 and 126–128; that span reads GTR.

Belongs to the RNase PH family. In terms of assembly, homohexameric ring arranged as a trimer of dimers.

It carries out the reaction tRNA(n+1) + phosphate = tRNA(n) + a ribonucleoside 5'-diphosphate. Phosphorolytic 3'-5' exoribonuclease that plays an important role in tRNA 3'-end maturation. Removes nucleotide residues following the 3'-CCA terminus of tRNAs; can also add nucleotides to the ends of RNA molecules by using nucleoside diphosphates as substrates, but this may not be physiologically important. Probably plays a role in initiation of 16S rRNA degradation (leading to ribosome degradation) during starvation. The protein is Ribonuclease PH of Rhodopirellula baltica (strain DSM 10527 / NCIMB 13988 / SH1).